Reading from the N-terminus, the 77-residue chain is Large ribosomal subunit protein eL14 (77 aa).

The protein belongs to the eukaryotic ribosomal protein eL14 family.

The polypeptide is Large ribosomal subunit protein eL14 (Methanococcus maripaludis (strain C7 / ATCC BAA-1331)).